Reading from the N-terminus, the 374-residue chain is Transcription factor NF-E2 45 kDa subunit (374 aa).

Disordered stretches follow at residues 1-21 (MSPC…IPEP) and 40-61 (LNAP…GPPP). Residues 1–83 (MSPCPPQQSR…PGFPLPAPPY (83 aa)) are required for interaction with MAPK8. The interval 1–207 (MSPCPPQQSR…PPAETPLALE (207 aa)) is transactivation domain. The span at 48–61 (FEPPAPVPYPGPPP) shows a compositional bias: pro residues. 2 short sequence motifs (PXY motif) span residues 61–65 (PPPSY) and 79–83 (PAPPY). The interval 132–165 (LSAGPSKPQEDPESDSGLSLNYSDAESLELEGTE) is disordered. The residue at position 158 (S158) is a Phosphoserine; by MAPK8. S171 carries the phosphoserine; by PKA modification. The segment at 207–227 (EPSSGPVRAKPTARGEAGSRD) is disordered. In terms of domain architecture, bZIP spans 267-330 (LVRDIRRRGK…EVMRQQLTDL (64 aa)). The basic motif stretch occupies residues 269-288 (RDIRRRGKNKVAAQNCRKRK). The interval 292–299 (IVQLEREL) is leucine-zipper. Residue K369 forms a Glycyl lysine isopeptide (Lys-Gly) (interchain with G-Cter in SUMO); alternate linkage. K369 participates in a covalent cross-link: Glycyl lysine isopeptide (Lys-Gly) (interchain with G-Cter in SUMO1); alternate.

Belongs to the bZIP family. CNC subfamily. In terms of assembly, homodimer; can bind DNA as a homodimer. Erythroid transcription activator nuclear factor erythroid-derived 2 (NF-E2), composed of a heterodimer of NFE2 and MAFK, possesses transactivation activity on beta-globin. Also forms high affinity heterodimer with MAFG; the interaction promotes erythropoiesis. Interacts (via the PXY motif 1) with ITCH (via the WW 1 domain); the interaction promotes 'Lys63'-linked ubiquitination of NFE2, translocates it to the cytoplasm and inhibits its transactivation activity. Interacts with KMT2D/MLL2; the interaction promotes transactivation of the beta-globin locus. Interacts with MAPK8 (phosphorylated form); the interaction leads to phosphorylation of NFE2 in undifferentiated cells. Post-translationally, phosphorylated on serine residues. In undifferentiated erythrocytes, phosphorylated by MAPK8 which then leads to ubiquitination and protein degradation. In terms of processing, sumoylated. Sumoylation is required for translocation to nuclear bodies PODs, anchoring to the gene loci, and transactivation of the beta-globin gene. Ubiquitinated mainly by 'Lys63'-linked ubiquitin. Polyubiquitination with 'Lys63'-linked ubiquitin by ITCH retains NFE2 in the cytoplasm preventing its transactivation activity. In undifferentiated erythrocyte, is ubiquitinated after MAPK8-mediatd phosphorylation leading to protein degradation.

It is found in the nucleus. The protein localises to the cytoplasm. Functionally, component of the NF-E2 complex essential for regulating erythroid and megakaryocytic maturation and differentiation. Binds to the hypersensitive site 2 (HS2) of the beta-globin control region (LCR). This subunit (NFE2) recognizes the TCAT/C sequence of the AP-1-like core palindrome present in a number of erythroid and megakaryocytic gene promoters. Requires MAFK or other small MAF proteins for binding to the NF-E2 motif. May play a role in all aspects of hemoglobin production from globin and heme synthesis to procurement of iron. The chain is Transcription factor NF-E2 45 kDa subunit (NFE2) from Bos taurus (Bovine).